An 80-amino-acid polypeptide reads, in one-letter code: Gamma-conotoxin-like Am6.6 (80 aa).

The N-terminal stretch at 1 to 19 (MEKLTILLLVAAILMSTQA) is a signal peptide. The propeptide occupies 20–45 (LNQEQRQQAKINLLSKKKPSAERWRR). Disulfide bonds link Cys47–Cys61, Cys54–Cys65, and Cys60–Cys70. 4-carboxyglutamate is present on residues Glu56 and Glu59. A 4-carboxyglutamate modification is found at Glu71. Residue Pro76 is modified to 4-hydroxyproline. The propeptide occupies 78-80 (RAI).

The protein belongs to the conotoxin O2 family. Expressed by the venom duct.

It is found in the secreted. Gamma-conotoxins may act on voltage-gated non-specific cation pacemaker channels (HCN). The polypeptide is Gamma-conotoxin-like Am6.6 (Conus amadis (Amadis cone)).